The chain runs to 1252 residues: DNA-directed RNA polymerase subunit beta (1252 aa).

Belongs to the RNA polymerase beta chain family. The RNAP catalytic core consists of 2 alpha, 1 beta, 1 beta' and 1 omega subunit. When a sigma factor is associated with the core the holoenzyme is formed, which can initiate transcription.

It carries out the reaction RNA(n) + a ribonucleoside 5'-triphosphate = RNA(n+1) + diphosphate. In terms of biological role, DNA-dependent RNA polymerase catalyzes the transcription of DNA into RNA using the four ribonucleoside triphosphates as substrates. This Chlamydia pneumoniae (Chlamydophila pneumoniae) protein is DNA-directed RNA polymerase subunit beta.